Reading from the N-terminus, the 530-residue chain is RNA-binding protein 39 (530 aa).

Positions Met-1–Thr-146 are disordered. N-acetylalanine is present on Ala-2. The segment covering Pro-14–Ser-32 has biased composition (basic and acidic residues). 2 stretches are compositionally biased toward basic residues: residues Lys-33–Lys-56 and Lys-64–Tyr-95. The residue at position 95 (Tyr-95) is a Phosphotyrosine. Phosphoserine occurs at positions 97 and 100. Lys-111 participates in a covalent cross-link: Glycyl lysine isopeptide (Lys-Gly) (interchain with G-Cter in SUMO2). The residue at position 117 (Ser-117) is a Phosphoserine. Lys-119 participates in a covalent cross-link: Glycyl lysine isopeptide (Lys-Gly) (interchain with G-Cter in SUMO2). Residues Lys-119–Pro-130 show a composition bias toward basic residues. Ser-121 and Ser-136 each carry phosphoserine. Basic and acidic residues predominate over residues Phe-131–Thr-146. Thr-146 bears the Phosphothreonine mark. An RRM 1 domain is found at Arg-153–Ala-230. Residue Lys-244 forms a Glycyl lysine isopeptide (Lys-Gly) (interchain with G-Cter in SUMO2) linkage. The RRM 2 domain maps to Met-250–Glu-328. Residues Lys-291–Gly-355 are activating domain. The interval Lys-291 to Gln-406 is interaction with JUN. A phosphoserine mark is found at Ser-334, Ser-337, and Ser-341. Positions Gly-355–Gln-406 are interaction with ESR1 and ESR2. Positions Gln-406–Arg-530 are interaction with NCOA6. The RRM 3 domain occupies Glu-445–Leu-508.

It belongs to the splicing factor SR family. Interacts with NCOA6 and JUN. Interacts with ESR1 and ESR2, in the presence of estradiol (E2). Interacts with RSRC1 (via Arg/Ser-rich domain). Interacts with SF3B1. Interacts with ZNF106 (via N-terminus). Aryl sulfonamide anticancer drugs, such as indisulam (E7070) or E7820, promote ubiquitination and subsequent degradation by the DCX(DCAF15) complex. RBM39 degradation results in splicing defects and death in cancer cell lines. Aryl sulfonamide anticancer drugs change the substrate specificity of DCAF15 by acting as a molecular glue that promotes binding between DCAF15 and weak affinity interactor RBM39. As to expression, widely expressed. Highly expressed in pancreas, skeletal muscle, lung and brain. Expressed at intermediate level in kidney, liver and heart.

The protein localises to the nucleus speckle. RNA-binding protein that acts as a pre-mRNA splicing factor. Acts by promoting exon inclusion via regulation of exon cassette splicing. Also acts as a transcriptional coactivator for steroid nuclear receptors ESR1/ER-alpha and ESR2/ER-beta, and JUN/AP-1, independently of the pre-mRNA splicing factor activity. The protein is RNA-binding protein 39 of Homo sapiens (Human).